The sequence spans 208 residues: Large ribosomal subunit protein uL4 (208 aa).

Residues 58–77 (RGGGRKPWRQKGTGRARQGS) form a disordered region. A compositionally biased stretch (basic residues) spans 60–71 (GGRKPWRQKGTG).

Belongs to the universal ribosomal protein uL4 family. Part of the 50S ribosomal subunit.

Functionally, one of the primary rRNA binding proteins, this protein initially binds near the 5'-end of the 23S rRNA. It is important during the early stages of 50S assembly. It makes multiple contacts with different domains of the 23S rRNA in the assembled 50S subunit and ribosome. Forms part of the polypeptide exit tunnel. This chain is Large ribosomal subunit protein uL4, found in Caldicellulosiruptor bescii (strain ATCC BAA-1888 / DSM 6725 / KCTC 15123 / Z-1320) (Anaerocellum thermophilum).